We begin with the raw amino-acid sequence, 470 residues long: Probable E3 ubiquitin-protein ligase TRIML1 (470 aa).

The segment at cysteine 22–tryptophan 63 adopts an RING-type zinc-finger fold. Coiled coils occupy residues serine 135–valine 170 and lysine 196–isoleucine 235. The B30.2/SPRY domain occupies threonine 273–isoleucine 470.

Interacts with USP5. Testis.

The enzyme catalyses S-ubiquitinyl-[E2 ubiquitin-conjugating enzyme]-L-cysteine + [acceptor protein]-L-lysine = [E2 ubiquitin-conjugating enzyme]-L-cysteine + N(6)-ubiquitinyl-[acceptor protein]-L-lysine.. It functions in the pathway protein modification; protein ubiquitination. Its function is as follows. Probable E3 ubiquitin-protein ligase which plays an important role in blastocyst development. Involved in progression of blastocyst stage and subsequent embryo development. The protein is Probable E3 ubiquitin-protein ligase TRIML1 (Triml1) of Mus musculus (Mouse).